The sequence spans 335 residues: Ketol-acid reductoisomerase (NAD(P)(+)) (335 aa).

The KARI N-terminal Rossmann domain occupies 2–182; the sequence is AKIYKDEDIS…GCARAGVIES (181 aa). NADP(+) contacts are provided by residues 25-28, Arg49, Ser53, and 83-86; these read YGSQ and DMVQ. The active site involves His108. Gly134 serves as a coordination point for NADP(+). Positions 183 to 328 constitute a KARI C-terminal knotted domain; that stretch reads TFKEETETDL…RKLREMMFRG (146 aa). Residues Asp191, Glu195, Glu227, and Glu231 each contribute to the Mg(2+) site. Ser252 is a binding site for substrate.

The protein belongs to the ketol-acid reductoisomerase family. As to quaternary structure, homodimer. It depends on Mg(2+) as a cofactor.

It catalyses the reaction (2R)-2,3-dihydroxy-3-methylbutanoate + NAD(+) = (2S)-2-acetolactate + NADH + H(+). The catalysed reaction is (2R)-2,3-dihydroxy-3-methylbutanoate + NADP(+) = (2S)-2-acetolactate + NADPH + H(+). It functions in the pathway amino-acid biosynthesis; L-isoleucine biosynthesis; L-isoleucine from 2-oxobutanoate: step 2/4. It participates in amino-acid biosynthesis; L-valine biosynthesis; L-valine from pyruvate: step 2/4. Its function is as follows. Involved in the biosynthesis of branched-chain amino acids (BCAA). Catalyzes an alkyl-migration followed by a ketol-acid reduction of (S)-2-acetolactate (S2AL) to yield (R)-2,3-dihydroxy-isovalerate. In the isomerase reaction, S2AL is rearranged via a Mg-dependent methyl migration to produce 3-hydroxy-3-methyl-2-ketobutyrate (HMKB). In the reductase reaction, this 2-ketoacid undergoes a metal-dependent reduction by NADPH or NADH to yield (R)-2,3-dihydroxy-isovalerate. The polypeptide is Ketol-acid reductoisomerase (NAD(P)(+)) (Ignisphaera aggregans (strain DSM 17230 / JCM 13409 / AQ1.S1)).